The primary structure comprises 1010 residues: PHD finger protein 20 (1010 aa).

2 consecutive Tudor domains span residues 4–69 (HPPN…RPLE) and 83–147 (GSSE…GNAR). Disordered regions lie at residues 142-373 (IVGN…EGQL) and 483-609 (EKSP…GKLK). Positions 147-246 (RPKETDHKSL…VEKKPEKDLV (100 aa)) are enriched in basic and acidic residues. A Phosphoserine modification is found at S159. A DNA-binding region (a.T hook) is located at residues 257 to 269 (KRKRGRPPSITPT). The span at 267–280 (TPTAVDSNSQTLQP) shows a compositional bias: polar residues. 3 stretches are compositionally biased toward basic and acidic residues: residues 292–325 (KRSD…DLSR), 483–493 (EKSPEPEEGPG), and 525–541 (AKEK…ELVR). Residues 455–485 (FRCKVLDCLKFFRKAKLLHYHMKYFHGMEKS) form a C2H2-type zinc finger. The segment covering 542-554 (VKPKKKKKKKKKT) has biased composition (basic residues). Residues 657 to 703 (RCICEVQEENDFMIQCEECQCWQHGVCMGLLEENVPEKYTCYVCQDP) form a PHD-type zinc finger. The segment at 804–827 (RSEESPSYRTLNGAVEKPSPLPRS) is disordered. K841 carries the N6-acetyllysine modification. Phosphoserine occurs at positions 876 and 878. The interval 877–902 (LSPRLGWPIDQDRSRGDIDPKPSSPK) is disordered. Basic and acidic residues predominate over residues 886 to 902 (DQDRSRGDIDPKPSSPK).

As to quaternary structure, homodimer; disulfide-linked. Component of some MLL1/MLL complex, at least composed of the core components KMT2A/MLL1, ASH2L, HCFC1, WDR5 and RBBP5, as well as the facultative components BACC1, CHD8, E2F6, HSP70, INO80C, KANSL1, LAS1L, MAX, MCRS1, MGA, MYST1/MOF, PELP1, PHF20, PRP31, RING2, RUVB1/TIP49A, RUVB2/TIP49B, SENP3, TAF1, TAF4, TAF6, TAF7, TAF9 and TEX10. Component of the NSL complex at least composed of MOF/KAT8, KANSL1, KANSL2, KANSL3, MCRS1, PHF20, OGT1/OGT, WDR5 and HCFC1. Ubiquitinated by TRIM26; leading to proteasomal degradation.

Its subcellular location is the nucleus. In terms of biological role, contributes to methyllysine-dependent p53/TP53 stabilization and up-regulation after DNA damage. Methyllysine-binding protein, component of the MOF histone acetyltransferase protein complex. Not required for maintaining the global histone H4 'Lys-16' acetylation (H4K16ac) levels or locus specific histone acetylation, but instead works downstream in transcriptional regulation of MOF target genes. As part of the NSL complex it may be involved in acetylation of nucleosomal histone H4 on several lysine residues. The chain is PHD finger protein 20 (Phf20) from Mus musculus (Mouse).